The chain runs to 130 residues: Small ribosomal subunit protein uS11 (130 aa).

The protein belongs to the universal ribosomal protein uS11 family. Part of the 30S ribosomal subunit.

In terms of biological role, located on the platform of the 30S subunit. The sequence is that of Small ribosomal subunit protein uS11 from Ignicoccus hospitalis (strain KIN4/I / DSM 18386 / JCM 14125).